Reading from the N-terminus, the 307-residue chain is Delta-9 acyl-lipid desaturase 2 (307 aa).

Residues 1 to 17 show a composition bias toward polar residues; sequence MSVTSTVEENHQKNPST. The disordered stretch occupies residues 1-21; it reads MSVTSTVEENHQKNPSTPAAV. A helical membrane pass occupies residues 53–73; sequence LALLAPFYFTWSALWVTFLFY. Residues histidine 85 and histidine 90 each contribute to the Fe cation site. The Histidine box-1 signature appears at 85-90; the sequence is HRNLAH. The chain crosses the membrane as a helical span at residues 99–119; sequence LEYLLAYCALLAIQGDPIDWV. Fe cation contacts are provided by histidine 122, histidine 125, and histidine 126. Residues 122 to 126 carry the Histidine box-2 motif; that stretch reads HRYHH. The next 2 helical transmembrane spans lie at 182-202 and 204-224; these read VLFH…MSFV and WGMG…NSLC. Fe cation contacts are provided by histidine 225, histidine 254, histidine 257, and histidine 258. Positions 254–258 match the Histidine box-3 motif; it reads HNNHH.

The protein belongs to the fatty acid desaturase type 1 family. The cofactor is Fe cation. In terms of tissue distribution, strongly expressed in flowers, roots, leaves, seedpods, and inflorescence meristems.

The protein resides in the endoplasmic reticulum membrane. It carries out the reaction a 1-hexacosanoyl-2-acyl-phosphoglycerolipid + 2 Fe(II)-[cytochrome b5] + O2 + 2 H(+) = a 1-[(17Z)-hexacos-17-enoyl]-2-acyl-phosphoglycerolipid + 2 Fe(III)-[cytochrome b5] + 2 H2O. It catalyses the reaction a 1-tetracosanoyl-2-acyl-phosphoglycerolipid + 2 Fe(II)-[cytochrome b5] + O2 + 2 H(+) = a 1-[(15Z)-tetracos-15-enoyl]-2-acyl-phosphoglycerolipid + 2 Fe(III)-[cytochrome b5] + 2 H2O. It functions in the pathway lipid metabolism; polyunsaturated fatty acid biosynthesis. Involved in delta-9 desaturation of fatty acids. Plays a role in the production of very-long-chain monounsaturated fatty acids (VLCMUFAs) in seed lipids and in membrane phospholipids and sphingolipids. Acts as C-16:0 desaturase for monogalactosyl diacylglycerol (MGDG) and phosphatidylglycerol (PG). Is an essential component for cold adaptation. Is essential to adjust the acyl composition of organelle membrane lipid composition in response to cold stress. This chain is Delta-9 acyl-lipid desaturase 2, found in Arabidopsis thaliana (Mouse-ear cress).